The following is a 430-amino-acid chain: Glutamate-1-semialdehyde 2,1-aminomutase (430 aa).

Lys-267 is subject to N6-(pyridoxal phosphate)lysine.

It belongs to the class-III pyridoxal-phosphate-dependent aminotransferase family. HemL subfamily. As to quaternary structure, homodimer. Requires pyridoxal 5'-phosphate as cofactor.

It localises to the cytoplasm. The catalysed reaction is (S)-4-amino-5-oxopentanoate = 5-aminolevulinate. The protein operates within porphyrin-containing compound metabolism; protoporphyrin-IX biosynthesis; 5-aminolevulinate from L-glutamyl-tRNA(Glu): step 2/2. This Thermomicrobium roseum (strain ATCC 27502 / DSM 5159 / P-2) protein is Glutamate-1-semialdehyde 2,1-aminomutase.